Here is a 316-residue protein sequence, read N- to C-terminus: Ribosomal RNA small subunit methyltransferase H (316 aa).

S-adenosyl-L-methionine-binding positions include 35 to 37, D55, F79, D101, and Q108; that span reads GGH. Positions 291-316 are disordered; the sequence is AIKPSKDEVDENTRSRSSVLRIAEKL. Basic and acidic residues predominate over residues 294–304; that stretch reads PSKDEVDENTR.

Belongs to the methyltransferase superfamily. RsmH family.

It is found in the cytoplasm. It catalyses the reaction cytidine(1402) in 16S rRNA + S-adenosyl-L-methionine = N(4)-methylcytidine(1402) in 16S rRNA + S-adenosyl-L-homocysteine + H(+). Specifically methylates the N4 position of cytidine in position 1402 (C1402) of 16S rRNA. In Vibrio atlanticus (strain LGP32) (Vibrio splendidus (strain Mel32)), this protein is Ribosomal RNA small subunit methyltransferase H.